A 61-amino-acid polypeptide reads, in one-letter code: Metallothionein-1E (61 aa).

N-acetylmethionine is present on M1. The segment at 1-29 (MDPNCSCPTGGSCSCAGSCTCKACRCTSC) is beta. C5, C7, C13, C15, C19, C21, C24, C26, C29, C33, C34, C36, C37, C41, C44, C48, C50, C57, C59, and C60 together coordinate a divalent metal cation. The alpha stretch occupies residues 30–61 (KKSCCSCCPVGCAKCAQGCICKGASDKCSCCA).

Belongs to the metallothionein superfamily. Type 1 family. In terms of assembly, monomer.

Metallothioneins have a high content of cysteine residues that bind various heavy metals; these proteins are transcriptionally regulated by both heavy metals and glucocorticoids. In Sus scrofa (Pig), this protein is Metallothionein-1E (MT1E).